The following is a 526-amino-acid chain: Bifunctional purine biosynthesis protein PurH (526 aa).

The MGS-like domain occupies Met1–Thr147.

It belongs to the PurH family.

It catalyses the reaction (6R)-10-formyltetrahydrofolate + 5-amino-1-(5-phospho-beta-D-ribosyl)imidazole-4-carboxamide = 5-formamido-1-(5-phospho-D-ribosyl)imidazole-4-carboxamide + (6S)-5,6,7,8-tetrahydrofolate. It carries out the reaction IMP + H2O = 5-formamido-1-(5-phospho-D-ribosyl)imidazole-4-carboxamide. Its pathway is purine metabolism; IMP biosynthesis via de novo pathway; 5-formamido-1-(5-phospho-D-ribosyl)imidazole-4-carboxamide from 5-amino-1-(5-phospho-D-ribosyl)imidazole-4-carboxamide (10-formyl THF route): step 1/1. The protein operates within purine metabolism; IMP biosynthesis via de novo pathway; IMP from 5-formamido-1-(5-phospho-D-ribosyl)imidazole-4-carboxamide: step 1/1. This is Bifunctional purine biosynthesis protein PurH from Neisseria gonorrhoeae (strain NCCP11945).